The following is a 4912-amino-acid chain: MFNRQASGGAGSSGQGAGSSQTASAAPVSAGVGVGGGGGASGAAAGAGSAAGSGSGSGSGSAAPPSHSPDLYLRPLPFLDAKWLRADLIASLRNAADGAVLWNHLIQDCELVSSPTAPLLNARGQLSYLGDDGKHYCGAQQLKCSCCQPEYCGPLSACNCDGCRPLDSDTAIKKLTTQAAAQQAAHLSQATDMVLSGWLWSQPPSQQARLDCQRSMISELQELALRAAGNCLSAQHLRQQLFIYERYFVALKRERERERKSTTSAQAVASVTTANTTIAATTANAAVESQPAEQQAEHGALGLARVATHAALNFSFAFLRRAWRSGEDTEMCSELLSEALASLQELPEATLFEAAVVSSLWLEVMERSIKFLRLVALGDPMGNRCTAPLNDRHTALCLLLELGVQKGTLAATLECVVLLLLLWEKDRAGNDNRDMPRKTGAPLQRILLRYQKIGATAKGGGIAGGEPAPVASATETFLRFLSLPKSSAAIVDLRRAAVVIISHLDRMVQPLMPRCLLRGGQATAASSSSAPQQRIYALGWPSLSKDQQGFSAEPTLSWSGESAGVPTLSCRFQIKQVACCETQMLILSQEGKLYTWRLAKPEAEPLPMEEVAHDVFISIAGHCEGRHFLAIDSNHNAYSWGTGEDHRLGHGDTHARAVPTKIAALEQHCVQSVYCGCSYSAAITCGGNLLTWGRGTYARLGHGNSDDRSLPTLVVALSDHMVVDVALGSGDAHSLALTSEGLVFAWGDGDYGKLGNGNCNGSLQPILVESLPRVQRVFAGSQFSVALSSEGQLYTWGKATCLGHQLVERSVQGCSVPRLVSSLQHKRIVDVAVSVAHCLALSSSGEVFGWGRNDSQQICPASVSSEPLLRTPILVSLPTFPASGIACTSAQSLVWTQSSHQGVPRRAPFVVDLGEPTFRLLDQLLGMCSSQDNRQTPNQESECIAVACLNLFRLQLLALIANGVEPRQVGLASGSRLLCSLKTRILGLAGGSQVLRTIQVAAQQALQDGWSVLLPTAAERAQTLTSLLPSEPGQASSAGHRFMTDLLVSSLMAEGGLESALQHAIRLESSSCSADCGDGVHLPLLQLITRLLSNNAALSQTRLSPTLGKQQEKEEEEREQQHQEPSTSPSLSLLHRFQRLLLSHIHQAQPEEETTGAEALLLQYMHALIPACVATLQKAHELALQCREPGENSFGQMVGHLGRVLQADISDALLNELLVGLLLLKRDRPQCLGGLRWARLFLPLLRVLDRLNRALGEGELRDGDDMGWPGIICRGGPKGGPPPADPETHYVRRADMENLLLDGSRCIILAGYVCDLSGYNCESETLRSVLDSGLGKDLTAEMSSQVHRTAMEHILEHHKLGKYMVQASTEEKSSAPGPSRLTHFSSECALAQLLGLVANLMCSGPALQPAELQCRQLDKSSLLSGGLQLLQPSNPFDEEKGEARSSHSCHSTAGNTPTELPPPLPMQQQLAPGRGKSQLQLRADAFISGLAEARVSEPPVAAWLALTERYCKAHNLMWHQEFATEHPVQELERLLSAVLIRHQYLGGLVLNALETEVPPPRQLGEIIRLVHQAKWSVVRTRQQLNRSYKEVCAPILERLRFLLYEVRPAISPQQRGLRRLPILQRPPRFKMLVRRLLQELRSSRQPAKPEDLLNASIQQEQEKKPQSMPKQELEEQEEEETLLRRLNERQIHGEGELDPALMQDIVDFALQDSCDVETARRAMYCQMQRYQLRLAGLQIVQQLLELHGLLDAAQYSLLNGFLGLHLKSTSSGGGSTGSGSSLHVLGQLNMISAYQKARLLLAQSRVLDWAVRELRRLVNQEQQGHARGKDSTNLGTYVLLKRLPRARFLLSVFGLLAKELGPNELGFLINSGLLGTVLGLLAQTGGEGATGGQVHGELSILYEDSVLKQKSSKAQLSGPDLAKLMKIGTRIVRGADWKWGDQDGNPPGEGRIISEVGEDGWVRVEWYTGATNSYRMGKEGQYDLQLADSALNVASPTEPEREDVSGSEASPTSDSHPSKLLRHCAAKLLQILAVGTGLHGAQLDKDALRGMTSMFRTIIYPKPSMSNISYALGWLNLGFIRAISGDCPRLCLELSTPGWLSHYLSLLEQPAGNEAGVYRQLHCLRLLQLILAQWGAEEEPRMPALVHQLFATLGRIALHCPGDASLLPTAEGKARVLLTASHSGSVAEELVALLRRLHTLPSWNPVINSFLAQKLCVAAELLAEQSHSTALDSEQVFVLGVLGAMGGHDLRPRVGLHCFHEGSHMVIASFTPKGRCLLAPGGVGSGVGFVKVQLPAVMPHLDHTVFSLSRLPMNEMLLNAWTVLLYGPAPELRELPSSADGRLDLALLRAQQLQMAVLHTNGVLYRHQVALRRILKQRAPGSIYASPDEPDRSDAESQQPGEQDQQLSSGSGQEPQLLIQCILLRATQASPVKACYSYMDLATAALNCIQSLATQAHQELSEGGGVPPNGRALSSPPQPTMVHGVPVYNVARKEQKPSEQVEQKSKWPAAATDAQLIGQIMEMGFTRRTVELALKQLSLQAEIMPTPEQIVQWILEHPDVCANTIEEDTLPLASSASSHDPEADSDNECPSSNSTTSSSTSSDTVEGQPMAVSGPAPPVKFESRKDFQTADLYALYVRGLVRPGMTVRCCRDFEEIKQGDMGTVLIVDTEGLHDLNVQVDWRNHGSTYWVCFVHIELVEAAQTHHQPRPPPIAVGARVRLRTSSLRYGMLCPLRLGRSQGSSAIGVVSSVRSKQLTVDFPDQPAWQGHINEVELVASQPTSATLPSLGDSCSQMPPSDLIEDWSRCIRSLTVSSNEAAAKHLLNGSNQPWQSCSSGPCRHWIRLELHDRILVHSLTLKVSPEDHSHMPSLLEIRVGDCVDSLKEYTWIPVPAGASRVLLMQQVPTYYPWVEVVVKQCQNNGIQCKIHGIKFVGRRQQPDLQHILANAQFLASEYSAGVGPGSTAGAGAVSTSHEEAAAAPEQDLPCTVMVWGLNDKEQLGGLKGSKVKVPTFSQTISRLRPIHIAGGSKSLFIVSQDGKVYACGEGTNGRLGLGVTHNVPLPHQLPVLRQYVVKKVAVHSGGKHALALTLDGKVFSWGEGEDGKLGHGNRTTLDKPRLVEALRAKKIRDVACGSSHSAAISSQGELYTWGLGEYGRLGHGDNTTQLKPKLVTALAGRRVVQVACGSRDAQTLALTEDGAVFSWGDGDFGKLGRGGSEGSDTPHEIERLSGIGVVQIECGAQFSLALTRAGEVWTWGKGDYYRLGHGGDQHVRKPQPIGGLRGRRVIHVAVGALHCLAVTDAGQVYAWGDNDHGQQGSGNTFVNKKPALVIGLDAVFVNRVACGSSHSIAWGLPNASSDEEKRGPVPFSSTRDPLGGSSLGIYEAETMQTLKQEAKPLNQSSLSESLALETPAARQAALGHVLRAMSILQARQLIVAALTSHSKVNFKERGAVGGEEDHLIGGPIMGAPLQLAETIAQGGGEAPADATDAGLQEHSPEAAVDALTGGMSGGANTLPPLSAGPLSAFQSLTGSLSMSGSLSSSALPQHKHSRMSASAMSVMAATMTQQEEMLSHISHCHGLDDFGGLLGEPEAKSLVELLKLAVCGRCGPPSTSQTIADTLISLGAGTPAVAAMLLETCITELEDLCTSRHCLGKLPKPVMQESSHPYVDNVNVTGVVRIPGAEMLRLEFDSQCSTEKRNDPLVIMDGTGRVLAMRSGREFAHWAPEIRVLGDELRWKFSSDSSVNGWGWRFWVHAIMPAATLGESGSDRAVLSQPSMALVMSLLDSRLAPRQPSVLLRLASALAACSQLGALTTAQRIWSLRKLHAVLLLEQAPRPQDPSLSTLLQPLIPELLRQYEYEEPQVRGGIHLMHSDYFKTLAALACDMQLDAALPATSSSSSSSAAPGAISSTGDVHKWAWFKRYCIAVRVAQSLIRRTELPRAFCLEVRKKFAEMLPSSSSNSNANPGCQSPGASMLNSTTSLSSSTVSNVSPPPGITGEQPDLHCHAHQLESTSTLLHEDHTLFQAPHDAQLLQWLNRRPDDWALSWGGASTIYGWGHNHRGQLGGLEGSRIKTPTPCEALSLLRPVQLAGGEQSLFAVTPDGKLFATGYGSGGRLGVGGSDSWAIPTLLGSLQHVFVKKVAVNSGGKHCLALTTEGEVYAWGEGEDGKLGHGNRMSYDRPKLVEHLNGMSVADIACGSAHSAAITASGHVLTWGKGRYGRLGHGDSEDQLRPKLVEALLGYRAIDIACGSGDAQTLCITDDDNVWSWGDGDYGKLGRGGSDGCKLPYKIESLAGLGVVKVECGSQFSVALTKSGAVYTWGKGDFHRLGHGSVDHVRRPKKVAALQGKKIISIATGSLHCVACSDSGEVYTWGDNDEGQLGDGTVTAIQRPRLVAALQGKHIVKVTCGSAHTLALSTSQLSERLRPLPNPPLEYDLVRDLAPEALHARLILLHHFSELVCPCLAMLPISGDLSLGALKDVLVYNIKEAAFRKVIQTTMVRDKQHGPVIELNRIQVKRSRNRCNGLAGIDGMKSVFGQMVQKLPLLTQEALALPHRVWKVKFVGESVDDCGGGYSESIAEMCDELQNGSVPLLINTPNGRGEAGANRDCFLLDPTLSSVLQMNMFRFLGVLMGIAVRTGSPLSINLAEPVWRQLTGEVLRPTDLTEVDRDYVAGLLCIRNMDDDPKLFTALELPFSTSSARGHEVPLSTRYTHISPRNRAEYVRLALGFRLHEFDEQVKAVRDGMSKVIPVPLLSLFSAAELQAMVCGSPDIPLGLLKSVATYKGFDPSSALVTWFWEVMEEFTNQERSLFLRFVWGRTRLPRTIADFRGRDFVLQVLEKNPPDHFLPESYTCFFLLKMPRYSCKAVLLEKLKYAIHFCKSIDTDEYARVAMGEPTEATGSEDNSDLESVASHEG.

Residues 1-67 form a disordered region; it reads MFNRQASGGA…GSGSAAPPSH (67 aa). The span at 8–17 shows a compositional bias: gly residues; sequence GGAGSSGQGA. The span at 18 to 31 shows a compositional bias: low complexity; sequence GSSQTASAAPVSAG. 2 stretches are compositionally biased toward gly residues: residues 32–41 and 49–59; these read VGVGGGGGAS and SAAGSGSGSGS. RCC1 repeat units follow at residues 634 to 685, 686 to 739, 741 to 789, 791 to 843, and 844 to 897; these read NHNA…AITC, GGNL…ALTS, GLVF…ALSS, GQLY…ALSS, and SGEV…VWTQ. Disordered stretches follow at residues 1102 to 1129, 1428 to 1475, and 1659 to 1681; these read RLSPTLGKQQEKEEEEREQQHQEPSTSP, QLLQ…PGRG, and QEQEKKPQSMPKQELEEQEEEET. Over residues 1446–1458 the composition is skewed to polar residues; it reads SHSCHSTAGNTPT. Residue Thr-1776 is modified to Phosphothreonine. One can recognise an MIB/HERC2 domain in the interval 1917-1990; the sequence is SGPDLAKLMK…QYDLQLADSA (74 aa). Disordered stretches follow at residues 1994–2018 and 2381–2412; these read ASPTEPEREDVSGSEASPTSDSHPS and GSIYASPDEPDRSDAESQQPGEQDQQLSSGSG. Positions 2396–2412 are enriched in polar residues; that stretch reads ESQQPGEQDQQLSSGSG. Residues 2511–2557 form the UBA domain; that stretch reads ATDAQLIGQIMEMGFTRRTVELALKQLSLQAEIMPTPEQIVQWILEH. Residues 2572 to 2620 form a disordered region; the sequence is LASSASSHDPEADSDNECPSSNSTTSSSTSSDTVEGQPMAVSGPAPPVK. The span at 2591–2604 shows a compositional bias: low complexity; sequence SSNSTTSSSTSSDT. Positions 2624–2699 constitute a CPH domain; the sequence is RKDFQTADLY…VCFVHIELVE (76 aa). In terms of domain architecture, DOC spans 2780–2958; sequence TSATLPSLGD…FLASEYSAGV (179 aa). 7 RCC1 repeats span residues 2985–3036, 3037–3090, 3091–3142, 3144–3194, 3197–3248, 3250–3300, and 3302–3352; these read PCTV…IVSQ, DGKV…ALTL, DGKV…AISS, GELY…TLAL, DGAV…ALTR, GEVW…AVTD, and GQVY…AWGL. Disordered stretches follow at residues 3352 to 3374 and 3953 to 4000; these read LPNASSDEEKRGPVPFSSTRDPL and LPSS…EQPD. The span at 3974 to 3988 shows a compositional bias: low complexity; it reads LNSTTSLSSSTVSNV. RCC1 repeat units lie at residues 4049–4099, 4101–4153, 4155–4205, 4207–4259, 4261–4311, 4313–4363, and 4365–4415; these read STIY…AVTP, GKLF…ALTT, GEVY…AITA, GHVL…CITD, DNVW…ALTK, GAVY…ACSD, and GEVY…ALST. Residues 4547–4882 form the HECT domain; the sequence is ALALPHRVWK…IHFCKSIDTD (336 aa). The active-site Glycyl thioester intermediate is Cys-4850. Residues 4891–4912 are disordered; the sequence is EPTEATGSEDNSDLESVASHEG.

It localises to the cytoplasm. Its subcellular location is the cytoskeleton. The protein resides in the microtubule organizing center. The protein localises to the centrosome. It is found in the centriole. It carries out the reaction S-ubiquitinyl-[E2 ubiquitin-conjugating enzyme]-L-cysteine + [acceptor protein]-L-lysine = [E2 ubiquitin-conjugating enzyme]-L-cysteine + N(6)-ubiquitinyl-[acceptor protein]-L-lysine.. The protein operates within protein modification; protein ubiquitination. Functionally, probable E3 ubiquitin-protein ligase which accepts ubiquitin from an E2 ubiquitin-conjugating enzyme in the form of a thioester and then directly transfers the ubiquitin to targeted substrates. The sequence is that of Probable E3 ubiquitin-protein ligase HERC2 (HERC2) from Drosophila melanogaster (Fruit fly).